A 211-amino-acid chain; its full sequence is Endonuclease III (211 aa).

In terms of domain architecture, HhH spans 111–130 (AHALESLPGVGHKTANVVLN). [4Fe-4S] cluster-binding residues include Cys-190, Cys-197, Cys-200, and Cys-206.

The protein belongs to the Nth/MutY family. It depends on [4Fe-4S] cluster as a cofactor.

It catalyses the reaction 2'-deoxyribonucleotide-(2'-deoxyribose 5'-phosphate)-2'-deoxyribonucleotide-DNA = a 3'-end 2'-deoxyribonucleotide-(2,3-dehydro-2,3-deoxyribose 5'-phosphate)-DNA + a 5'-end 5'-phospho-2'-deoxyribonucleoside-DNA + H(+). In terms of biological role, DNA repair enzyme that has both DNA N-glycosylase activity and AP-lyase activity. The DNA N-glycosylase activity releases various damaged pyrimidines from DNA by cleaving the N-glycosidic bond, leaving an AP (apurinic/apyrimidinic) site. The AP-lyase activity cleaves the phosphodiester bond 3' to the AP site by a beta-elimination, leaving a 3'-terminal unsaturated sugar and a product with a terminal 5'-phosphate. The polypeptide is Endonuclease III (Treponema pallidum (strain Nichols)).